Consider the following 511-residue polypeptide: 2-isopropylmalate synthase (511 aa).

The Pyruvate carboxyltransferase domain occupies 6–269 (IIIFDTTLRD…YTDIKCENIF (264 aa)). 4 residues coordinate Mn(2+): D15, H203, H205, and N239. Residues 394-511 (VIEKLSVISG…SLKVEERKMA (118 aa)) are regulatory domain.

The protein belongs to the alpha-IPM synthase/homocitrate synthase family. LeuA type 1 subfamily. As to quaternary structure, homodimer. It depends on Mn(2+) as a cofactor.

The protein localises to the cytoplasm. The enzyme catalyses 3-methyl-2-oxobutanoate + acetyl-CoA + H2O = (2S)-2-isopropylmalate + CoA + H(+). It participates in amino-acid biosynthesis; L-leucine biosynthesis; L-leucine from 3-methyl-2-oxobutanoate: step 1/4. Functionally, catalyzes the condensation of the acetyl group of acetyl-CoA with 3-methyl-2-oxobutanoate (2-ketoisovalerate) to form 3-carboxy-3-hydroxy-4-methylpentanoate (2-isopropylmalate). This chain is 2-isopropylmalate synthase, found in Campylobacter jejuni subsp. jejuni serotype O:23/36 (strain 81-176).